The primary structure comprises 1196 residues: DNA-directed RNA polymerase subunit beta (1196 aa).

It belongs to the RNA polymerase beta chain family. As to quaternary structure, the RNAP catalytic core consists of 2 alpha, 1 beta, 1 beta' and 1 omega subunit. When a sigma factor is associated with the core the holoenzyme is formed, which can initiate transcription.

The enzyme catalyses RNA(n) + a ribonucleoside 5'-triphosphate = RNA(n+1) + diphosphate. Functionally, DNA-dependent RNA polymerase catalyzes the transcription of DNA into RNA using the four ribonucleoside triphosphates as substrates. This Lactococcus lactis subsp. lactis (strain IL1403) (Streptococcus lactis) protein is DNA-directed RNA polymerase subunit beta.